A 267-amino-acid chain; its full sequence is Ribosomal RNA small subunit methyltransferase NEP1 (267 aa).

The disordered stretch occupies residues 1–46 (MSELKNGTTEPKKNETTQSDSKSKSTSTNKSSVPPASLVPVQPTAL). Residues 16–32 (TTQSDSKSKSTSTNKSS) show a composition bias toward low complexity. S-adenosyl-L-methionine-binding positions include Leu195, Gly222, 227–229 (GKD), and 242–247 (LSDYPL).

Belongs to the class IV-like SAM-binding methyltransferase superfamily. RNA methyltransferase NEP1 family. In terms of assembly, homodimer.

It is found in the nucleus. It localises to the nucleolus. It catalyses the reaction a pseudouridine in rRNA + S-adenosyl-L-methionine = an N(1)-methylpseudouridine in rRNA + S-adenosyl-L-homocysteine + H(+). Functionally, S-adenosyl-L-methionine-dependent pseudouridine N(1)-methyltransferase that methylates the pseudouridine corresponding to position 1189 (Psi1189) in S.cerevisiae 18S rRNA. Involved the biosynthesis of the hypermodified N1-methyl-N3-(3-amino-3-carboxypropyl) pseudouridine (m1acp3-Psi) conserved in eukaryotic 18S rRNA. Also has an essential role in 40S ribosomal subunit biogenesis independent on its methyltransferase activity, facilitating the incorporation of ribosomal protein S19 during the formation of pre-ribosomes. In Candida albicans (Yeast), this protein is Ribosomal RNA small subunit methyltransferase NEP1.